The sequence spans 346 residues: NADPH dehydrogenase (346 aa).

23–26 (SPMC) contributes to the FMN binding site. Tyr-28 is a substrate binding site. Ala-60 and Gln-102 together coordinate FMN. Residue 164–167 (HGAH) coordinates substrate. FMN-binding positions include Arg-215 and 307-308 (GR).

This sequence belongs to the NADH:flavin oxidoreductase/NADH oxidase family. NamA subfamily. As to quaternary structure, homotetramer. Requires FMN as cofactor.

The enzyme catalyses A + NADPH + H(+) = AH2 + NADP(+). In terms of biological role, catalyzes the reduction of the double bond of an array of alpha,beta-unsaturated aldehydes and ketones. It also reduces the nitro group of nitroester and nitroaromatic compounds. It could have a role in detoxification processes. This chain is NADPH dehydrogenase, found in Bacillus cytotoxicus (strain DSM 22905 / CIP 110041 / 391-98 / NVH 391-98).